A 319-amino-acid polypeptide reads, in one-letter code: ATP-dependent 6-phosphofructokinase (319 aa).

Gly11 serves as a coordination point for ATP. 21-25 (RAVVR) serves as a coordination point for ADP. ATP contacts are provided by residues 72 to 73 (RC) and 102 to 105 (GDGS). Asp103 serves as a coordination point for Mg(2+). Position 125–127 (125–127 (TID)) interacts with substrate. The active-site Proton acceptor is Asp127. Residue Arg154 coordinates ADP. Substrate-binding positions include Arg162 and 169 to 171 (MGR). ADP-binding positions include 185–187 (GAE), Arg211, and 213–215 (KKH). Substrate is bound by residues Glu222, Arg243, and 249–252 (HVQR).

It belongs to the phosphofructokinase type A (PFKA) family. ATP-dependent PFK group I subfamily. Prokaryotic clade 'B1' sub-subfamily. In terms of assembly, homotetramer. Mg(2+) serves as cofactor.

The protein resides in the cytoplasm. The enzyme catalyses beta-D-fructose 6-phosphate + ATP = beta-D-fructose 1,6-bisphosphate + ADP + H(+). Its pathway is carbohydrate degradation; glycolysis; D-glyceraldehyde 3-phosphate and glycerone phosphate from D-glucose: step 3/4. With respect to regulation, allosterically activated by ADP and other diphosphonucleosides, and allosterically inhibited by phosphoenolpyruvate. Its function is as follows. Catalyzes the phosphorylation of D-fructose 6-phosphate to fructose 1,6-bisphosphate by ATP, the first committing step of glycolysis. This Anoxybacillus flavithermus (strain DSM 21510 / WK1) protein is ATP-dependent 6-phosphofructokinase.